Consider the following 449-residue polypeptide: Glycosyl hydrolase-like protein 1 (449 aa).

A beta-D-glucoside is bound by residues Q22, H119, 164-165 (NE), Y292, E350, W393, and Y406. Residue E165 is the Proton donor of the active site. E350 serves as the catalytic Nucleophile.

This sequence belongs to the glycosyl hydrolase 1 family. As to expression, mainly expressed in flowers, flower buds and young leaves, and, to a lesser extent, in old leaves, stems and roots.

The protein localises to the cytoplasm. Its pathway is secondary metabolite biosynthesis; terpenoid biosynthesis. In terms of biological role, component of the oleanane-type triterpene saponins (e.g. saponarioside A and saponarioside B) biosynthetic pathway, leading to the production of natural products with detergent properties used as traditional sources of soap. Beta-glycosidase that catalyzes the transfer of glucose moiety to QA-triFRXX to produce QA-triF(Q)RXX via the elongation of the C-28 sugar chain with a D-quinovose. This chain is Glycosyl hydrolase-like protein 1, found in Saponaria officinalis (Common soapwort).